The primary structure comprises 174 residues: CASP-like protein 4D2 (174 aa).

At 1–14 the chain is on the cytoplasmic side; sequence MAPPPPSPPPVSLK. The helical transmembrane segment at 15-35 threads the bilayer; that stretch reads VSLLLLRVLTGVFLVIALIIL. Residues 36–60 lie on the Extracellular side of the membrane; sequence STNSVTIVSQGSALKFHFKDVYAYR. A helical transmembrane segment spans residues 61 to 81; sequence YMLSAAVIGLLYAVIQLFFTI. Topologically, residues 82–150 are cytoplasmic; sequence SEFATGMKNP…FFSRGYASAS (69 aa). Residues 151–171 traverse the membrane as a helical segment; the sequence is LLLFSFICLAVLSVFSSLAIA. Topologically, residues 172–174 are extracellular; that stretch reads KRN.

Belongs to the Casparian strip membrane proteins (CASP) family. Homodimer and heterodimers.

The protein resides in the cell membrane. The protein is CASP-like protein 4D2 of Arabidopsis lyrata subsp. lyrata (Lyre-leaved rock-cress).